The primary structure comprises 411 residues: MSKEQFLRNKPHVNIGTIGHVDHGKTTLTSAITSVLKLKGCTEKSYSYEDIDSTKEEKKRGITINTTHVEYESDLRHYAHIDCPGHADYIKNMIIGAVQMDGAILVISLEDGPMPQTIEHLLLAKQIGIKKLVVFLNKEDKVDDEEIIFFIKEETKSMLDKYGFDSTLTPLITGSALKALEEIKLLKEIDLNNKWISKVINLIDTVDSYIEKPERNLNKPFLMPIEDSFYITGRGTVVTGRIENGIVKLNDKVELYGYDKSKLTSVIGIEMFNKGLSQGESGDNVGLLLRGIIKEDVKRGHVVAKPKSLKFYSEFKATLYILTSKEGGRTNPFKIGYKPQFFIRTLDITGEIKKLYSTTNENNTLELAIPGDNINANISLSKSIVLEKELRFSVREGGKTIGHGIIIDLIK.

Positions K10–E214 constitute a tr-type G domain. Residues G19–T26 form a G1 region. G19 to T26 serves as a coordination point for GTP. T26 serves as a coordination point for Mg(2+). A G2 region spans residues G61–N65. Residues D82–G85 are G3. GTP contacts are provided by residues D82–H86 and N137–D140. The tract at residues N137 to D140 is G4. The interval S175 to L177 is G5.

It belongs to the TRAFAC class translation factor GTPase superfamily. Classic translation factor GTPase family. EF-Tu/EF-1A subfamily.

It localises to the plastid. It is found in the apicoplast. The catalysed reaction is GTP + H2O = GDP + phosphate + H(+). Its function is as follows. GTP hydrolase that promotes the GTP-dependent binding of aminoacyl-tRNA to the A-site of ribosomes during protein biosynthesis. The chain is Elongation factor Tu, apicoplast (tufA) from Theileria parva (East coast fever infection agent).